We begin with the raw amino-acid sequence, 492 residues long: Glutamyl-tRNA(Gln) amidotransferase subunit A (492 aa).

Active-site charge relay system residues include lysine 79 and serine 154. Serine 178 functions as the Acyl-ester intermediate in the catalytic mechanism.

Belongs to the amidase family. GatA subfamily. Heterotrimer of A, B and C subunits.

It catalyses the reaction L-glutamyl-tRNA(Gln) + L-glutamine + ATP + H2O = L-glutaminyl-tRNA(Gln) + L-glutamate + ADP + phosphate + H(+). Functionally, allows the formation of correctly charged Gln-tRNA(Gln) through the transamidation of misacylated Glu-tRNA(Gln) in organisms which lack glutaminyl-tRNA synthetase. The reaction takes place in the presence of glutamine and ATP through an activated gamma-phospho-Glu-tRNA(Gln). The sequence is that of Glutamyl-tRNA(Gln) amidotransferase subunit A from Desulforudis audaxviator (strain MP104C).